The chain runs to 210 residues: Small ribosomal subunit protein uS4 (210 aa).

The 63-residue stretch at 99-161 (RRLDSVIYRM…SKNNATILSA (63 aa)) folds into the S4 RNA-binding domain.

It belongs to the universal ribosomal protein uS4 family. As to quaternary structure, part of the 30S ribosomal subunit. Contacts protein S5. The interaction surface between S4 and S5 is involved in control of translational fidelity.

Functionally, one of the primary rRNA binding proteins, it binds directly to 16S rRNA where it nucleates assembly of the body of the 30S subunit. Its function is as follows. With S5 and S12 plays an important role in translational accuracy. This is Small ribosomal subunit protein uS4 from Solibacter usitatus (strain Ellin6076).